The primary structure comprises 292 residues: Peroxisomal 2,4-dienoyl-CoA reductase [(3E)-enoyl-CoA-producing] (292 aa).

An N-acetylalanine modification is found at A2. Residues 35 to 40 (GGGSGI), 60 to 64 (RSLPR), and D86 each bind NADP(+). R60 provides a ligand contact to substrate. Substrate-binding positions include R88, F118, and 126-128 (SFN). K151 carries the post-translational modification N6-acetyllysine. NADP(+)-binding positions include K182 and 208 to 214 (PGPISGT). Position 219 (R219) interacts with substrate. S287 bears the Phosphoserine mark. The short motif at 290 to 292 (AKL) is the Microbody targeting signal element. K291 is modified (N6-acetyllysine).

The protein belongs to the short-chain dehydrogenases/reductases (SDR) family. 2,4-dienoyl-CoA reductase subfamily. As to quaternary structure, monomer, dimer and oligomer.

It localises to the peroxisome. It carries out the reaction a (2E,4Z)-dienoyl-CoA + NADPH + H(+) = a 4,5-saturated-(3E)-enoyl-CoA + NADP(+). It catalyses the reaction a (2E,4E)-dienoyl-CoA + NADPH + H(+) = a 4,5-saturated-(3E)-enoyl-CoA + NADP(+). The enzyme catalyses (2E,4E)-hexadienoyl-CoA + NADPH + H(+) = (3E)-hexenoyl-CoA + NADP(+). The catalysed reaction is (2E,4E)-decadienoyl-CoA + NADPH + H(+) = (3E)-decenoyl-CoA + NADP(+). It carries out the reaction (2E,4Z,7Z,10Z,13Z,16Z,19Z)-docosaheptaenoyl-CoA + NADPH + H(+) = (3E,7Z,10Z,13Z,16Z,19Z)-docosahexaenoyl-CoA + NADP(+). Functionally, auxiliary enzyme of beta-oxidation. Participates in the degradation of unsaturated fatty enoyl-CoA esters having double bonds in both even- and odd-numbered positions in peroxisome. Catalyzes the NADP-dependent reduction of 2,4-dienoyl-CoA to yield trans-3-enoyl-CoA. Has activity towards short and medium chain 2,4-dienoyl-CoAs, but also towards 2,4,7,10,13,16,19-docosaheptaenoyl-CoA, suggesting that it does not constitute a rate limiting step in the peroxisomal degradation of docosahexaenoic acid. In Pongo abelii (Sumatran orangutan), this protein is Peroxisomal 2,4-dienoyl-CoA reductase [(3E)-enoyl-CoA-producing] (DECR2).